Reading from the N-terminus, the 311-residue chain is Meteorin-like protein (311 aa).

Residues methionine 1 to glycine 13 are compositionally biased toward low complexity. A disordered region spans residues methionine 1–proline 24. Positions methionine 1–alanine 45 are cleaved as a signal peptide. Disulfide bonds link cysteine 52–cysteine 75, cysteine 107–cysteine 143, cysteine 188–cysteine 260, cysteine 191–cysteine 284, and cysteine 201–cysteine 306.

This sequence belongs to the meteorin family. Highly expressed in the skeletal muscle, in subcutaneous adipose tissue, epididymal white adipose tissue depots and heart. Also expressed in brown adipose tissues and kidney.

It localises to the secreted. Its function is as follows. Hormone induced following exercise or cold exposure that promotes energy expenditure. Induced either in the skeletal muscle after exercise or in adipose tissue following cold exposure and is present in the circulation. Able to stimulate energy expenditure associated with the browning of the white fat depots and improves glucose tolerance. Does not promote an increase in a thermogenic gene program via direct action on adipocytes, but acts by stimulating several immune cell subtypes to enter the adipose tissue and activate their prothermogenic actions. Stimulates an eosinophil-dependent increase in IL4 expression and promotes alternative activation of adipose tissue macrophages, which are required for the increased expression of the thermogenic and anti-inflammatory gene programs in fat. Required for some cold-induced thermogenic responses, suggesting a role in metabolic adaptations to cold temperatures. The protein is Meteorin-like protein (METRNL) of Homo sapiens (Human).